Reading from the N-terminus, the 387-residue chain is MKKWMITIAMLILAGIALFVFISPLKSHKTVSQQDLRNPDFLDDKEVLLYFSSSADQDAFGGGKSYALFISHDGTLSSFQMKGLELGSAKVHGDSVMLEDKNTIYTIKNGLRSHKRTYQHTGDSAGFLQNTDGFYTLYNSGYDKKGDGYRSELYRQMDGEWKKDVIPYYIRASGFHDGAIYALVPTDDGKGYQLLQIQADQKKLTYLSITEWQYREGASVESQLAVDDQAVYVMVRGQKAHDLYQMVKINKKSGEVELHDIAEYKNDEQTIYSSMPFSFKNSFFPYDGNLYFIDGFGKVHKIDAKTGKTSIVFTLSPDKMKAEFKEITQKGSSLYFFTYTYHKPAYIEQYSLKTGKKMKEKEIGKVKDVVTPKSHLKLYDVEVMKRF.

Positions 1–27 (MKKWMITIAMLILAGIALFVFISPLKS) are cleaved as a signal peptide.

This is an uncharacterized protein from Bacillus subtilis (strain 168).